Here is a 208-residue protein sequence, read N- to C-terminus: Protein-L-isoaspartate O-methyltransferase (208 aa).

Serine 59 is a catalytic residue.

It belongs to the methyltransferase superfamily. L-isoaspartyl/D-aspartyl protein methyltransferase family.

Its subcellular location is the cytoplasm. It catalyses the reaction [protein]-L-isoaspartate + S-adenosyl-L-methionine = [protein]-L-isoaspartate alpha-methyl ester + S-adenosyl-L-homocysteine. Functionally, catalyzes the methyl esterification of L-isoaspartyl residues in peptides and proteins that result from spontaneous decomposition of normal L-aspartyl and L-asparaginyl residues. It plays a role in the repair and/or degradation of damaged proteins. The polypeptide is Protein-L-isoaspartate O-methyltransferase (Salmonella paratyphi A (strain ATCC 9150 / SARB42)).